A 588-amino-acid polypeptide reads, in one-letter code: Aspartate--tRNA ligase (588 aa).

Glutamate 172 is an L-aspartate binding site. Residues 196–199 (QLFK) form an aspartate region. L-aspartate is bound at residue arginine 218. ATP-binding positions include 218–220 (RDE) and glutamine 227. An L-aspartate-binding site is contributed by histidine 449. Glutamate 483 contributes to the ATP binding site. Arginine 490 provides a ligand contact to L-aspartate. 535-538 (GLDR) is an ATP binding site.

Belongs to the class-II aminoacyl-tRNA synthetase family. Type 1 subfamily. In terms of assembly, homodimer.

The protein localises to the cytoplasm. The catalysed reaction is tRNA(Asp) + L-aspartate + ATP = L-aspartyl-tRNA(Asp) + AMP + diphosphate. Catalyzes the attachment of L-aspartate to tRNA(Asp) in a two-step reaction: L-aspartate is first activated by ATP to form Asp-AMP and then transferred to the acceptor end of tRNA(Asp). The protein is Aspartate--tRNA ligase of Histophilus somni (strain 2336) (Haemophilus somnus).